The primary structure comprises 501 residues: Eukaryotic translation initiation factor 3 subunit E (501 aa).

The region spanning 245–423 is the PCI domain; the sequence is CDLFFYTPYL…ESIESTSTNV (179 aa). 2 positions are modified to phosphoserine: serine 477 and serine 479.

The protein belongs to the eIF-3 subunit E family. As to quaternary structure, component of the eukaryotic translation initiation factor 3 (eIF-3) complex. The eIF-3 complex appears to include tif32/eif3a, SPAC25G10.08/eif3b, tif33/eif3c, SPBC4C3.07/eif3f, tif35/eif3g and sum1/eif3i. This set of common subunits may also associate exclusively with either moe1/eif3d and int6/eif3e, or with SPAC821.05/eif3h and SPAC1751.03/eif3m. The eIF-3 complex may also include SPAC3A12.13c/eif3j. Also interacts with the proteasome via rpn501/rpn502.

The protein resides in the cytoplasm. Component of the eukaryotic translation initiation factor 3 (eIF-3) complex, which is involved in protein synthesis of a specialized repertoire of mRNAs and, together with other initiation factors, stimulates binding of mRNA and methionyl-tRNAi to the 40S ribosome. The eIF-3 complex specifically targets and initiates translation of a subset of mRNAs involved in cell proliferation (Potential). Required for maintaining the basal level of atf1 and for transcriptional activation of core environmental stress response genes (CESR genes) in response to histidine starvation. May positively regulate proteasome activity. Required for nuclear localization of the proteasome subunit rpn501/rpn502. The sequence is that of Eukaryotic translation initiation factor 3 subunit E (int6) from Schizosaccharomyces pombe (strain 972 / ATCC 24843) (Fission yeast).